Here is a 373-residue protein sequence, read N- to C-terminus: Tomoregulin-1 (373 aa).

Positions 1 to 36 (MGAQAPLRLPAAPPLAVCGYTSVLLLFAFCLPGSGA) are cleaved as a signal peptide. Over 37-323 (SNQPAGGGGD…VPSRQKLTHV (287 aa)) the chain is Extracellular. Asn-56 carries N-linked (GlcNAc...) asparagine glycosylation. A Kazal-like 1 domain is found at 91–138 (ACQFQCHTNYIPVCGSNGDTYQNECFLRRAACKHQKDITVVARGPCYS). Cystine bridges form between Cys-92/Cys-122, Cys-96/Cys-115, and Cys-104/Cys-136. Asn-140 carries N-linked (GlcNAc...) asparagine glycosylation. Residues 140 to 162 (NGSGSGEGEEEGSGAGAHRKHSK) are disordered. Positions 182–230 (VCNIDCSGYSFNPVCASDGSSYNNPCFVREASCIRQEQIDIRHLGHCTD) constitute a Kazal-like 2 domain. Disulfide bonds link Cys-183–Cys-214, Cys-187–Cys-207, Cys-196–Cys-228, Cys-268–Cys-281, Cys-276–Cys-292, and Cys-294–Cys-303. One can recognise an EGF-like domain in the interval 264 to 304 (SHMPCPENLNGYCIHGKCEFIYSTQKASCRCESGYTGQHCE). The chain crosses the membrane as a helical span at residues 324–344 (LIAAIIGAVQIAIIVAIVMCI). At 345–373 (TRKCPKNNRGRRQKQNLGHFTSETSSRMV) the chain is on the cytoplasmic side. The segment at 352–373 (NRGRRQKQNLGHFTSETSSRMV) is disordered. Polar residues predominate over residues 359–373 (QNLGHFTSETSSRMV).

It belongs to the tomoregulin family. In terms of assembly, may interact with ST14.

The protein localises to the cell membrane. Neuron-specific restriction factor that prevents herpes simplex virus 1 (HHV-1) infection in the brain by blocking viral entry. Also able to restrict herpes simplex virus 2 (HHV-2) infection, although to a lesser extent. Acts by preventing the association between the viral glycoprotein D (gD) and its cell surface receptor NECTIN1, thereby inhibiting fusion of the virus and the cell membrane. Also able to prevent the association between the viral glycoprotein B (gB) and MYH9/NMMHC-IIA and MYH10/NMMHC-IIB receptors. The protein is Tomoregulin-1 (Tmeff1) of Rattus norvegicus (Rat).